A 468-amino-acid chain; its full sequence is Na(+)/H(+) antiporter (468 aa).

8 consecutive transmembrane segments (helical) span residues 12–32 (HLALIVAGGFITFFCYFSEVF), 36–56 (LLVGEAVLGSITGLIFGPHAA), 81–96 (DVRVFASAIELPGAYF), 103–123 (IIVMLLPVMAYGWLVTAGFAY), 133–153 (GSLLIAGCITSTDPVLSALIV), 169–189 (LLIAESGCNDGMAVPFFYFAI), 204–224 (WVLLVVLYECAFGIFFGCVIG), and 258–278 (GIGTIIGVDDLLMSFFAGILF). N-linked (GlcNAc...) asparagine glycosylation is present at asparagine 287. The helical transmembrane segment at 293–313 (VPAFIDQTFSLLFFTYYGTII) threads the bilayer. N-linked (GlcNAc...) asparagine glycosylation is present at asparagine 319. Helical transmembrane passes span 320-340 (WSVEGLPVWRLIVFSILTLVC), 362-382 (ALFVGHFGPIGVCAVYMAFLA), and 408-428 (IIWPIISFVILSSIIVHGFSI). Phosphoserine occurs at positions 449 and 451.

It belongs to the fungal Na(+)/H(+) exchanger family.

It localises to the cell membrane. In terms of biological role, sodium export from cell, takes up external protons in exchange for internal sodium ions. Involved in regulation of pH. The sequence is that of Na(+)/H(+) antiporter from Schizosaccharomyces pombe (strain 972 / ATCC 24843) (Fission yeast).